The sequence spans 198 residues: Probable nicotinate-nucleotide adenylyltransferase (198 aa).

The protein belongs to the NadD family.

It carries out the reaction nicotinate beta-D-ribonucleotide + ATP + H(+) = deamido-NAD(+) + diphosphate. The protein operates within cofactor biosynthesis; NAD(+) biosynthesis; deamido-NAD(+) from nicotinate D-ribonucleotide: step 1/1. Functionally, catalyzes the reversible adenylation of nicotinate mononucleotide (NaMN) to nicotinic acid adenine dinucleotide (NaAD). The sequence is that of Probable nicotinate-nucleotide adenylyltransferase from Albidiferax ferrireducens (strain ATCC BAA-621 / DSM 15236 / T118) (Rhodoferax ferrireducens).